Here is a 672-residue protein sequence, read N- to C-terminus: APC membrane recruitment protein 2 (672 aa).

Positions 1–21 (METGRSRGGGAAVSERGGGAR) are enriched in gly residues. 3 disordered regions span residues 1–23 (METGRSRGGGAAVSERGGGARAG), 74–360 (TMPS…DPSA), and 443–560 (MLSQ…DALC). Over residues 142–158 (GSLASSSVAKSHSFFSL) the composition is skewed to low complexity. The residue at position 154 (Ser154) is a Phosphoserine. Basic and acidic residues-rich tracts occupy residues 163–175 (GRSETGKGDHAEA) and 201–210 (RGKEEEEKAV). A phosphoserine mark is found at Ser223, Ser227, and Ser244. Positions 230 to 254 (CVKEEPPRAARRPDSPGQDASRHAA) are enriched in basic and acidic residues. The span at 255 to 269 (GEPAGGEQAPASAES) shows a compositional bias: low complexity. Ser284 bears the Phosphoserine mark. Residues 289–303 (SRGEDAEGHRREEKP) show a composition bias toward basic and acidic residues. Positions 343–354 (ASAVPDPSSVDP) are enriched in low complexity. A phosphoserine mark is found at Ser356 and Ser359. Over residues 446-457 (QTEDQGQGTQEG) the composition is skewed to low complexity. 2 stretches are compositionally biased toward basic and acidic residues: residues 478-488 (RCGEAAKDMSS) and 502-516 (QQKEEPKHPEKEHQE).

Belongs to the Amer family. As to quaternary structure, interacts with APC.

It localises to the cell membrane. Functionally, negative regulator of the canonical Wnt signaling pathway involved in neuroectodermal patterning. Acts by specifically binding phosphatidylinositol 4,5-bisphosphate (PtdIns(4,5)P2), translocating to the cell membrane and interacting with key regulators of the canonical Wnt signaling pathway, such as components of the beta-catenin destruction complex. This Mus musculus (Mouse) protein is APC membrane recruitment protein 2 (Amer2).